The chain runs to 281 residues: Cardosin-F (281 aa).

The region spanning tyrosine 18–alanine 278 is the Peptidase A1 domain. Aspartate 36 is an active-site residue. A disulfide bridge links cysteine 181 with cysteine 185. Aspartate 190 is a catalytic residue. Asparagine 213 carries N-linked (GlcNAc...) asparagine glycosylation.

It belongs to the peptidase A1 family. As to quaternary structure, heterodimer of a light chain and a heavy chain. An intermediate form is produced first, and undergoes proteolytic processing to remove the internal plant-specific insert (PSI) and the propeptide. Post-translationally, N-glycosylated. In terms of tissue distribution, pistils.

Its subcellular location is the microsome membrane. The protein localises to the protein storage vacuole. The protein resides in the secreted. It is found in the cell wall. It localises to the extracellular space. Its subcellular location is the extracellular matrix. Inhibited by pepstatin. Aspartic protease with a high preference for bonds between hydrophobic residues. This is Cardosin-F from Cynara cardunculus (Cardoon).